The chain runs to 479 residues: Probable periplasmic serine endoprotease DegP-like (479 aa).

An N-terminal signal peptide occupies residues 1–27 (MSIPRLKSYLSMFAAVLMLGQVLSAQA). Catalysis depends on charge relay system residues histidine 117, aspartate 147, and serine 220. Residues 218-220 (GNS) and 275-279 (LGVVI) each bind substrate. PDZ domains follow at residues 264–355 (LKKD…IRNG) and 361–468 (DVTI…LRQG). The disordered stretch occupies residues 368 to 395 (PDDDADIGTGTGADGSAERSSNRLGVSV).

This sequence belongs to the peptidase S1C family.

Its subcellular location is the periplasm. The enzyme catalyses Acts on substrates that are at least partially unfolded. The cleavage site P1 residue is normally between a pair of hydrophobic residues, such as Val-|-Val.. Might be efficient in the degradation of transiently denatured and unfolded proteins which accumulate in the periplasm following stress conditions. In Pseudomonas putida (strain W619), this protein is Probable periplasmic serine endoprotease DegP-like.